The following is a 397-amino-acid chain: Acetate kinase 2 (397 aa).

Mg(2+) is bound at residue asparagine 8. Lysine 15 lines the ATP pocket. Residue arginine 89 coordinates substrate. The active-site Proton donor/acceptor is the aspartate 146. ATP is bound by residues 206 to 210 (HLGNG), 281 to 283 (DFR), and 329 to 333 (GVGEN). Glutamate 380 contacts Mg(2+).

Belongs to the acetokinase family. As to quaternary structure, homodimer. Requires Mg(2+) as cofactor. Mn(2+) is required as a cofactor.

The protein localises to the cytoplasm. The catalysed reaction is acetate + ATP = acetyl phosphate + ADP. It participates in metabolic intermediate biosynthesis; acetyl-CoA biosynthesis; acetyl-CoA from acetate: step 1/2. In terms of biological role, catalyzes the formation of acetyl phosphate from acetate and ATP. Can also catalyze the reverse reaction. In Listeria monocytogenes serovar 1/2a (strain ATCC BAA-679 / EGD-e), this protein is Acetate kinase 2.